Here is a 408-residue protein sequence, read N- to C-terminus: 5-hydroxytryptamine receptor 1A (408 aa).

Over 1–32 (MDASNNTTSWNILQRGRMGPSWRRCPVSYQII) the chain is Extracellular. Residues N5 and N6 are each glycosylated (N-linked (GlcNAc...) asparagine). Residues 33-53 (ASLFLGRSFSAGIFGNACVIA) traverse the membrane as a helical segment. At 54 to 67 (AIALERSLQNVANY) the chain is on the cytoplasmic side. Residues 68–92 (LIGSLAVTDLMVSVLVLPMAAQNQV) traverse the membrane as a helical segment. The Extracellular segment spans residues 93 to 101 (LNKWTLGQV). The helical transmembrane segment at 102–126 (TCDIFISLDVLCCTSSILHLCAIAL) threads the bilayer. C103 and C181 are oxidised to a cystine. The serotonin site is built by D110 and C114. A DRY motif; important for ligand-induced conformation changes motif is present at residues 127 to 129 (DRY). The Cytoplasmic segment spans residues 127-146 (DRYWAITDPIDYVNKRTPRR). The helical transmembrane segment at 147-168 (AAVLISITWIVGFSISIPPMLG) threads the bilayer. At 169–187 (WRTPEDRSDPNACRISEDP) the chain is on the extracellular side. Residues 188–210 (GYTIYSTFGAFYIPLILMLVLYG) form a helical membrane-spanning segment. Topologically, residues 211–333 (KIFKAARFRI…LARERKTVKT (123 aa)) are cytoplasmic. The interval 235–255 (TCLSVSQQSPKEKQRGAQQEL) is disordered. Residues K332, T333, and G339 each contribute to the 1D-myo-inositol 4-phosphate site. The chain crosses the membrane as a helical span at residues 334-357 (LGIIMGTFILCWLPFFIVALVLPF). Topologically, residues 358–364 (CETCHMP) are extracellular. The helical transmembrane segment at 365–389 (HLLFDIITWLGYSNSLLNPIIYAYF) threads the bilayer. Residues 382 to 386 (NPIIY) carry the NPxxY motif; important for ligand-induced conformation changes and signaling motif. Residues F389, N390, and K391 each coordinate 1D-myo-inositol 4-phosphate. Topologically, residues 390 to 408 (NKDFQSAFKKIIKCKFCRQ) are cytoplasmic.

The protein belongs to the G-protein coupled receptor 1 family. 5-hydroxytryptamine receptor subfamily. HTR1A sub-subfamily. In terms of tissue distribution, first expressed in the rostral part of the brain stem at stage 22. At later stages of development, expression is localized to serotonergic neurons. The expression pattern changes in the tadpole of stage 41 where, in addition to serotonergic neurons, expression is also localized to the inner nuclear layer (INL) of the developing retina. This expression pattern continues through to the start of metamorphosis (stage 46). In adults, expressed in the brain, in particular the telencephalon, diencephalon and mesencephalon. In the telencephalic region, expression is localized to the lateral, dorsal and medial pallium, and in the striatum, septum and amygdala. In the mesencephalic region, expression is strongest in the optic tectum and torus semicircularis with moderate levels of expression in tegmental nuclei. In diencephalon, localized to the dorsal and ventral thalamus and the preoptic area of the hypothalamus.

Its subcellular location is the cell membrane. With respect to regulation, G-protein coupled receptor activity is regulated by lipids: phosphatidylinositol 4-phosphate increases HTR1A-mediated activity. G-protein coupled receptor for 5-hydroxytryptamine (serotonin). Also functions as a receptor for various drugs and psychoactive substances. Ligand binding causes a conformation change that triggers signaling via guanine nucleotide-binding proteins (G proteins) and modulates the activity of downstream effectors, such as adenylate cyclase. HTR1A is coupled to G(i)/G(o) G alpha proteins and mediates inhibitory neurotransmission: signaling inhibits adenylate cyclase activity and activates a phosphatidylinositol-calcium second messenger system that regulates the release of Ca(2+) ions from intracellular stores. Beta-arrestin family members regulate signaling by mediating both receptor desensitization and resensitization processes. Activation of the receptor may play a role in the exit from G0 phase and in promoting DNA synthesis. This chain is 5-hydroxytryptamine receptor 1A, found in Xenopus laevis (African clawed frog).